The following is a 560-amino-acid chain: Clathrin interactor EPSIN 1 (560 aa).

Residues 20–152 (LKVLKVPEME…NNKEKISEIR (133 aa)) enclose the ENTH domain. The interval 190–288 (NFDSYKDRDS…KPSTGSANQV (99 aa)) is disordered. A compositionally biased stretch (basic and acidic residues) spans 193-220 (SYKDRDSREDKNDYESFQKSRRGVKTEE). Polar residues predominate over residues 221–233 (QSYTSKKSFSRYG). The segment covering 234-251 (STDHDNLSSGKKSPDSAK) has biased composition (basic and acidic residues). The segment covering 274 to 287 (GTSSNKPSTGSANQ) has biased composition (polar residues). The Clathrin binding signature appears at 296–300 (IGDFL). An ALPHA-ADR binding motif is present at residues 320–322 (DLF). A compositionally biased stretch (polar residues) spans 414-439 (SHSASVSTGPQAPSVHGSATNTTSPL). Disordered regions lie at residues 414-453 (SHSASVSTGPQAPSVHGSATNTTSPLSFADSKPQHLQKKD) and 517-560 (LGKT…GFKQ). A compositionally biased stretch (low complexity) spans 526-536 (QQQQQQQQQQQ). The span at 544 to 554 (FFSSLSNQRYQ) shows a compositional bias: polar residues.

The protein belongs to the epsin family. As to quaternary structure, interacts with clathrin, VTI11, GAMMA-ADR and VSR1. Binds to the deubiquitinating enzyme AMSH3. As to expression, mostly expressed in cotyledons and flowers, and, to a lower extent, in roots, leaves and siliques (at protein level).

The protein resides in the golgi apparatus. It is found in the prevacuolar compartment. It localises to the cytoplasm. Its subcellular location is the cytoplasmic vesicle. The protein localises to the clathrin-coated vesicle. The protein resides in the cytoskeleton. Functionally, may have a role in transport via clathrin-coated vesicles from the trans-Golgi network to endosomes. Stimulates clathrin assembly. Does not seem to bind to phospholipids. Plays an important role in the vacuolar trafficking of soluble cargo proteins at the trans-Golgi network. This Arabidopsis thaliana (Mouse-ear cress) protein is Clathrin interactor EPSIN 1 (EPSIN1).